Consider the following 556-residue polypeptide: 2-succinyl-5-enolpyruvyl-6-hydroxy-3-cyclohexene-1-carboxylate synthase (556 aa).

This sequence belongs to the TPP enzyme family. MenD subfamily. As to quaternary structure, homodimer. The cofactor is Mg(2+). Mn(2+) serves as cofactor. Thiamine diphosphate is required as a cofactor.

It catalyses the reaction isochorismate + 2-oxoglutarate + H(+) = 5-enolpyruvoyl-6-hydroxy-2-succinyl-cyclohex-3-ene-1-carboxylate + CO2. It functions in the pathway quinol/quinone metabolism; 1,4-dihydroxy-2-naphthoate biosynthesis; 1,4-dihydroxy-2-naphthoate from chorismate: step 2/7. Its pathway is quinol/quinone metabolism; menaquinone biosynthesis. In terms of biological role, catalyzes the thiamine diphosphate-dependent decarboxylation of 2-oxoglutarate and the subsequent addition of the resulting succinic semialdehyde-thiamine pyrophosphate anion to isochorismate to yield 2-succinyl-5-enolpyruvyl-6-hydroxy-3-cyclohexene-1-carboxylate (SEPHCHC). This chain is 2-succinyl-5-enolpyruvyl-6-hydroxy-3-cyclohexene-1-carboxylate synthase, found in Staphylococcus epidermidis (strain ATCC 35984 / DSM 28319 / BCRC 17069 / CCUG 31568 / BM 3577 / RP62A).